Here is a 1405-residue protein sequence, read N- to C-terminus: Protein crumbs homolog 1 (1405 aa).

The first 27 residues, 1-27 (MKLKRTAYLLFLYLSSSLLICIKNSFC), serve as a signal peptide directing secretion. Residues 28 to 1339 (NKNNTRCLSG…RCELDLADDR (1312 aa)) are Extracellular-facing. One can recognise an EGF-like 1; atypical domain in the interval 30-67 (NNTRCLSGPCQNNSTCKHFPQDNNCCLDTANNLDKDCE). 33 cysteine pairs are disulfide-bonded: Cys-34–Cys-45, Cys-39–Cys-54, Cys-55–Cys-66, Cys-73–Cys-84, Cys-78–Cys-95, Cys-97–Cys-106, Cys-113–Cys-124, Cys-118–Cys-133, Cys-135–Cys-144, Cys-151–Cys-162, Cys-156–Cys-171, Cys-173–Cys-182, Cys-189–Cys-200, Cys-194–Cys-209, Cys-211–Cys-220, Cys-227–Cys-238, Cys-232–Cys-247, Cys-249–Cys-258, Cys-265–Cys-276, Cys-270–Cys-285, Cys-287–Cys-297, Cys-304–Cys-315, Cys-309–Cys-324, Cys-326–Cys-335, Cys-342–Cys-353, Cys-347–Cys-382, Cys-384–Cys-393, Cys-400–Cys-411, Cys-405–Cys-420, Cys-422–Cys-437, Cys-444–Cys-455, Cys-449–Cys-468, and Cys-470–Cys-479. A glycan (N-linked (GlcNAc...) asparagine) is linked at Asn-41. EGF-like domains follow at residues 69–107 (LKDP…LNCE) and 109–145 (ATNS…RFCE). One can recognise an EGF-like 4; calcium-binding domain in the interval 147-183 (DHNECASSPCHNGAMCQDGINGYSCFCVPGYQGRHCD). Residues 185-221 (EVDECVSDPCKNEAVCLNEIGRYTCVCPQEFSGVNCE) form the EGF-like 5; calcium-binding domain. The 37-residue stretch at 223-259 (EIDECRSQPCLHGATCQDAPGGYSCDCAPGFLGEHCE) folds into the EGF-like 6; calcium-binding domain. EGF-like domains lie at 261–298 (SVNE…MHCE), 300–336 (LIPL…ALCE), 338–394 (DINE…IHCE), 396–438 (DVDE…ENCS), and 440–480 (ILLG…PLCE). One can recognise a Laminin G-like 1 domain in the interval 482–669 (VTTLSFGSNG…GLSSNVKAGC (188 aa)). N-linked (GlcNAc...) asparagine glycans are attached at residues Asn-560 and Asn-656. 4 disulfides stabilise this stretch: Cys-641-Cys-669, Cys-675-Cys-686, Cys-680-Cys-695, and Cys-697-Cys-706. Positions 671 to 707 (GKDWCESQPCQNRGRCINLWQGYQCECDRPYTGSNCL) constitute an EGF-like 12 domain. Positions 713–884 (GRFGQDDSTG…PILVNVTQGC (172 aa)) constitute a Laminin G-like 2 domain. N-linked (GlcNAc...) asparagine glycans are attached at residues Asn-756 and Asn-879. Cystine bridges form between Cys-850–Cys-884, Cys-890–Cys-901, Cys-895–Cys-910, Cys-912–Cys-921, Cys-927–Cys-938, and Cys-932–Cys-947. EGF-like domains follow at residues 886–922 (GDNT…RACE) and 923–959 (QVQW…LSRE). A Laminin G-like 3 domain is found at 950 to 1136 (NAVFSGLSRE…VSTNMVLTGC (187 aa)). N-linked (GlcNAc...) asparagine glycans are attached at residues Asn-967, Asn-974, and Asn-999. Intrachain disulfides connect Cys-1095–Cys-1136, Cys-1142–Cys-1153, Cys-1147–Cys-1162, Cys-1164–Cys-1173, Cys-1180–Cys-1190, Cys-1185–Cys-1199, Cys-1201–Cys-1210, Cys-1217–Cys-1228, Cys-1222–Cys-1237, Cys-1239–Cys-1248, Cys-1258–Cys-1273, Cys-1267–Cys-1282, Cys-1284–Cys-1293, Cys-1300–Cys-1311, Cys-1305–Cys-1320, and Cys-1322–Cys-1331. The EGF-like 15 domain maps to 1138–1174 (PSNACHSSPCLHGGNCEDSYSSYRCACLSGWSGTHCE). The EGF-like 16; calcium-binding domain occupies 1176–1211 (NIDECFSSPCIHGNCSDGVAAYHCRCEPGYTGVNCE). Asn-1189 carries N-linked (GlcNAc...) asparagine glycosylation. EGF-like domains are found at residues 1213–1249 (DVDN…RFCR) and 1254–1294 (PSTV…EWCE). N-linked (GlcNAc...) asparagine glycans are attached at residues Asn-1242 and Asn-1264. Positions 1296-1332 (DINECASDPCINGGLCRDLVNRFLCICDVAFAGERCE) constitute an EGF-like 19; calcium-binding domain. A helical membrane pass occupies residues 1340 to 1360 (LLGIFTAVGSGTLALFFILLL). At 1361-1405 (AGVASLIASNKRATQGTYSPSGQEKAGPRVEMWIRMPPPALERLI) the chain is on the cytoplasmic side.

Belongs to the Crumbs protein family. In terms of assembly, component of a complex composed of PALS1, CRB1 and EPB41L5. Within the complex, interacts (via intracellular domain) with PALS1 and EPB41L5 (via FERM domain). Forms a complex with MPP4 and PALS1. Interacts with MPDZ/MUPP1 and MPP4. Post-translationally, glycosylated. Expressed in the kidney, lung, stomach and testis. Expressed in the brain. Expressed in the retina of the eye. Expressed in the outer nuclear layer, photoreceptor layer and inner nuclear layer of the retina. Expressed in Mueller cell radial processes in the inner nuclear layer, in apical processes sclerad to the external limiting membrane, and in the subapical region, adjacent to the adherens junction of retinal photoreceptors. In the brain, expressed in the granular layer of the cerebellum, the hippocampal dentate gyrus, the olfactory bulbs, the subventricular region lining the telencephalic ventricles and the rostral migratory stream. In terms of tissue distribution, ubiquitously expressed.

It localises to the apical cell membrane. Its subcellular location is the secreted. The protein localises to the cell projection. The protein resides in the cilium. It is found in the photoreceptor outer segment. It localises to the photoreceptor inner segment. Its subcellular location is the cytoplasm. The protein localises to the cell junction. The protein resides in the focal adhesion. Its function is as follows. Plays a role in photoreceptor morphogenesis in the retina. May maintain cell polarization and adhesion. May play a role in epidermal tissue morphogenesis. May function in cell attachment for stratified epithelial organization. The polypeptide is Protein crumbs homolog 1 (Crb1) (Mus musculus (Mouse)).